We begin with the raw amino-acid sequence, 607 residues long: Dolichyl-diphosphooligosaccharide--protein glycosyltransferase subunit 1 (607 aa).

A signal peptide spans Met-1 to Ser-23. Over Ala-24–Leu-434 the chain is Lumenal. Lys-187 carries the post-translational modification N6-acetyllysine. Asn-299 is a glycosylation site (N-linked (GlcNAc...) asparagine). Residues Met-435 to Ile-455 form a helical membrane-spanning segment. Over Tyr-456 to Leu-607 the chain is Cytoplasmic. At Lys-538 the chain carries N6-acetyllysine; alternate. A Glycyl lysine isopeptide (Lys-Gly) (interchain with G-Cter in SUMO2); alternate cross-link involves residue Lys-538.

Belongs to the OST1 family. As to quaternary structure, component of the oligosaccharyltransferase (OST) complex. OST exists in two different complex forms which contain common core subunits RPN1, RPN2, OST48, OST4, DAD1 and TMEM258, either STT3A or STT3B as catalytic subunits, and form-specific accessory subunits. STT3A complex assembly occurs through the formation of 3 subcomplexes. Subcomplex 1 contains RPN1 and TMEM258, subcomplex 2 contains the STT3A-specific subunits STT3A, DC2/OSTC, and KCP2 as well as the core subunit OST4, and subcomplex 3 contains RPN2, DAD1, and OST48. The STT3A complex can form stable complexes with the Sec61 complex or with both the Sec61 and TRAP complexes. Interacts with TMEM35A/NACHO. Post-translationally, ubiquitinated by the ECS(ASB11) complex. In terms of processing, ufmylated by UFL1 in response to endoplasmic reticulum stress, promoting reticulophagy of endoplasmic reticulum sheets.

It is found in the endoplasmic reticulum membrane. It functions in the pathway protein modification; protein glycosylation. Subunit of the oligosaccharyl transferase (OST) complex that catalyzes the initial transfer of a defined glycan (Glc(3)Man(9)GlcNAc(2) in eukaryotes) from the lipid carrier dolichol-pyrophosphate to an asparagine residue within an Asn-X-Ser/Thr consensus motif in nascent polypeptide chains, the first step in protein N-glycosylation. N-glycosylation occurs cotranslationally and the complex associates with the Sec61 complex at the channel-forming translocon complex that mediates protein translocation across the endoplasmic reticulum (ER). All subunits are required for a maximal enzyme activity. This is Dolichyl-diphosphooligosaccharide--protein glycosyltransferase subunit 1 from Macaca fascicularis (Crab-eating macaque).